The primary structure comprises 284 residues: Pseudouridine-5'-phosphate glycosidase (284 aa).

Glu17 (proton donor) is an active-site residue. Substrate is bound by residues Lys77 and Val97. Residue Asp126 coordinates Mn(2+). Residue 128–130 (SQD) coordinates substrate. Lys147 functions as the Nucleophile in the catalytic mechanism.

It belongs to the pseudouridine-5'-phosphate glycosidase family. As to quaternary structure, homotrimer. Mn(2+) is required as a cofactor.

It catalyses the reaction D-ribose 5-phosphate + uracil = psi-UMP + H2O. Catalyzes the reversible cleavage of pseudouridine 5'-phosphate (PsiMP) to ribose 5-phosphate and uracil. Functions biologically in the cleavage direction, as part of a pseudouridine degradation pathway. The polypeptide is Pseudouridine-5'-phosphate glycosidase (Thermotoga neapolitana (strain ATCC 49049 / DSM 4359 / NBRC 107923 / NS-E)).